The sequence spans 314 residues: Serine/threonine-protein phosphatase SIT4 (314 aa).

The Mn(2+) site is built by Asp53, His55, Asp85, and Asn117. The active-site Proton donor is His118. Residues His167 and His241 each coordinate Mn(2+).

This sequence belongs to the PPP phosphatase family. PP-6 (PP-V) subfamily. As to quaternary structure, interacts with MDS3. Mn(2+) is required as a cofactor.

The protein localises to the cytoplasm. The enzyme catalyses O-phospho-L-seryl-[protein] + H2O = L-seryl-[protein] + phosphate. It catalyses the reaction O-phospho-L-threonyl-[protein] + H2O = L-threonyl-[protein] + phosphate. Functionally, serine/threonine protein phosphatase which is involved in the dephosphorylation of the large subunit of RNA polymerase II. Is required in late G1 for normal G1 cyclin expression, bud initiation and expression of certain genes that are periodically expressed during late G1. Plays a role during hyphal growth through the regulation of cell wall biogenesis, osmosensing and protein translation. Involved in virulence in a mouse systemic infection model. This Candida albicans (strain SC5314 / ATCC MYA-2876) (Yeast) protein is Serine/threonine-protein phosphatase SIT4 (SIT4).